A 289-amino-acid chain; its full sequence is MSAKHPVIAVTGSSGAGTTTTSLAFRKIFAQLNLHAAEVEGDSFHRYTRPEMDMAIRKARDAGRHISYFGPEANDFGLLEQTFIEYGQSGKGKSRKYLHTYDEAVPWNQVPGTFTPWQPLPEPTDVLFYEGLHGGVVTPQHNVAQHVDLLVGVVPIVNLEWIQKLIRDTSERGHSREAVMDSVVRSMEDYINYITPQFSRTHLNFQRVPTVDTSNPFAAKGIPSLDESFVVIHFRNLEGIDFPWLLAMLQGSFISHINTLVVPGGKMGLAMELIMLPLVQRLMEGKKIE.

12 to 20 (GSSGAGTTT) serves as a coordination point for ATP.

Belongs to the phosphoribulokinase family.

The enzyme catalyses D-ribulose 5-phosphate + ATP = D-ribulose 1,5-bisphosphate + ADP + H(+). This is Probable phosphoribulokinase (prkB) from Escherichia coli (strain K12).